A 150-amino-acid chain; its full sequence is Ribonuclease K6 (150 aa).

The first 23 residues, 1–23 (MVLCFPLLLLLLVLWGPVCPLHA), serve as a signal peptide directing secretion. His38 serves as the catalytic Proton acceptor. 4 cysteine pairs are disulfide-bonded: Cys46–Cys104, Cys60–Cys114, Cys78–Cys129, and Cys85–Cys92. The N-linked (GlcNAc...) asparagine glycan is linked to Asn55. Residues 61-65 (KHQNT) and Lys86 each bind substrate. Asn100 carries an N-linked (GlcNAc...) asparagine glycan. Residue Arg105 participates in substrate binding. Catalysis depends on His145, which acts as the Proton donor.

Belongs to the pancreatic ribonuclease family. As to quaternary structure, interacts (via N-terminus) with bacterial lipopolysaccharide (LPS).

It localises to the secreted. It is found in the lysosome. Its subcellular location is the cytoplasmic granule. In terms of biological role, ribonuclease which shows a preference for the pyrimidines uridine and cytosine. Has potent antibacterial activity against a range of Gram-positive and Gram-negative bacteria, including P.aeruginosa, A.baumanii, M.luteus, S.aureus, E.faecalis, E.faecium, S.saprophyticus and E.coli. Causes loss of bacterial membrane integrity, and also promotes agglutination of Gram-negative bacteria. Probably contributes to urinary tract sterility. Bactericidal activity is independent of RNase activity. The sequence is that of Ribonuclease K6 (RNASE6) from Pongo pygmaeus (Bornean orangutan).